The sequence spans 280 residues: uncharacterized protein (280 aa).

3 helical membrane-spanning segments follow: residues 15-35 (IVDILLVAVILWIGVFIINRL), 68-88 (IGFIFYVISLFVHDFGKILAG), and 94-114 (IVIGFGAQSLIKDVLAGVFLI).

Belongs to the MscS (TC 1.A.23) family.

The protein localises to the cell membrane. In terms of biological role, may play a role in resistance to osmotic downshock. This is an uncharacterized protein from Bacillus subtilis (strain 168).